The chain runs to 199 residues: Hematopoietic prostaglandin D synthase (199 aa).

Residues 2–79 enclose the GST N-terminal domain; it reads PNYKLTYFNL…YLARESGLAG (78 aa). Residues Tyr8, Arg14, Trp39, 49–51, and 63–64 each bind glutathione; these read GKV and QS. Residues 81–199 form the GST C-terminal domain; sequence TPVEQALADA…WIQKRPKTAI (119 aa).

It belongs to the GST superfamily. Sigma family. Glutathione serves as cofactor. Highly expressed in liver, kidney, small intestine and colon, moderately in pancreas, bone marrow, lung and ovary, and expressed at low levels in spleen, thymus, heart and brain. Not detected in oviduct or skin (at protein level). Expressed in liver.

It is found in the cytoplasm. It catalyses the reaction prostaglandin H2 = prostaglandin D2. The catalysed reaction is RX + glutathione = an S-substituted glutathione + a halide anion + H(+). It carries out the reaction 2-glyceryl-prostaglandin H2 = 2-glyceryl-prostaglandin D2. Its function is as follows. Bifunctional enzyme which catalyzes both the conversion of PGH2 to PGD2, a prostaglandin involved in smooth muscle contraction/relaxation and a potent inhibitor of platelet aggregation, and the conjugation of glutathione with a wide range of aryl halides, organic isothiocyanates and alpha,beta-unsaturated carbonyls. Also exhibits low glutathione-peroxidase activity towards cumene hydroperoxide and t-butyl hydroperoxide. This chain is Hematopoietic prostaglandin D synthase (HPGDS), found in Gallus gallus (Chicken).